A 372-amino-acid chain; its full sequence is Ligninase B (372 aa).

The signal sequence occupies residues methionine 1 to alanine 21. A propeptide spanning residues alanine 22–arginine 28 is cleaved from the precursor. Cystine bridges form between cysteine 31/cysteine 43, cysteine 42/cysteine 313, cysteine 62/cysteine 148, and cysteine 277/cysteine 345. Catalysis depends on histidine 75, which acts as the Proton acceptor. Ca(2+) contacts are provided by aspartate 76, glycine 94, aspartate 96, and serine 98. A heme b-binding site is contributed by histidine 204. Ca(2+)-binding residues include serine 205, aspartate 222, threonine 224, isoleucine 227, and aspartate 229. Asparagine 285 carries an N-linked (GlcNAc...) asparagine glycan. A compositionally biased stretch (low complexity) spans phenylalanine 350–threonine 361. The segment at phenylalanine 350–alanine 372 is disordered.

The protein belongs to the peroxidase family. Ligninase subfamily. Heme b is required as a cofactor. The cofactor is Ca(2+).

It catalyses the reaction 1-(3,4-dimethoxyphenyl)-2-(2-methoxyphenoxy)propane-1,3-diol + H2O2 = 3,4-dimethoxybenzaldehyde + guaiacol + glycolaldehyde + H2O. The catalysed reaction is 2 (3,4-dimethoxyphenyl)methanol + H2O2 = 2 (3,4-dimethoxyphenyl)methanol radical + 2 H2O. It functions in the pathway secondary metabolite metabolism; lignin degradation. Depolymerization of lignin. Catalyzes the C(alpha)-C(beta) cleavage of the propyl side chains of lignin. The polypeptide is Ligninase B (LIPB) (Phanerodontia chrysosporium (White-rot fungus)).